A 109-amino-acid chain; its full sequence is Spermidine export protein MdtI (109 aa).

4 helical membrane-spanning segments follow: residues W6 to L26, I36 to V56, A64 to F84, and L88 to L108.

This sequence belongs to the drug/metabolite transporter (DMT) superfamily. Small multidrug resistance (SMR) (TC 2.A.7.1) family. MdtI subfamily. Forms a complex with MdtJ.

It is found in the cell inner membrane. Catalyzes the excretion of spermidine. In Shigella dysenteriae serotype 1 (strain Sd197), this protein is Spermidine export protein MdtI.